A 544-amino-acid polypeptide reads, in one-letter code: Chaperonin GroEL 2 (544 aa).

Residues 29 to 32 (TLGP), 86 to 90 (DGTTT), glycine 413, 482 to 484 (NVL), and aspartate 498 each bind ATP.

It belongs to the chaperonin (HSP60) family. Forms a cylinder of 14 subunits composed of two heptameric rings stacked back-to-back. Interacts with the co-chaperonin GroES.

The protein localises to the cytoplasm. The catalysed reaction is ATP + H2O + a folded polypeptide = ADP + phosphate + an unfolded polypeptide.. Functionally, together with its co-chaperonin GroES, plays an essential role in assisting protein folding. The GroEL-GroES system forms a nano-cage that allows encapsulation of the non-native substrate proteins and provides a physical environment optimized to promote and accelerate protein folding. The sequence is that of Chaperonin GroEL 2 from Roseiflexus sp. (strain RS-1).